Consider the following 360-residue polypeptide: Isopentenyl-diphosphate delta-isomerase (360 aa).

Position 6–7 (arginine 6–lysine 7) interacts with substrate. Residues threonine 62, glycine 63–threonine 65, serine 93, and asparagine 122 contribute to the FMN site. Serine 93–arginine 95 is a binding site for substrate. A substrate-binding site is contributed by glutamine 157. Mg(2+) is bound at residue glutamate 158. FMN contacts are provided by residues lysine 189, serine 214, threonine 219, glycine 272 to arginine 274, and alanine 293 to leucine 294.

Belongs to the IPP isomerase type 2 family. Homooctamer. Dimer of tetramers. FMN serves as cofactor. Requires NADPH as cofactor. Mg(2+) is required as a cofactor.

It localises to the cytoplasm. The enzyme catalyses isopentenyl diphosphate = dimethylallyl diphosphate. In terms of biological role, involved in the biosynthesis of isoprenoids. Catalyzes the 1,3-allylic rearrangement of the homoallylic substrate isopentenyl (IPP) to its allylic isomer, dimethylallyl diphosphate (DMAPP). The polypeptide is Isopentenyl-diphosphate delta-isomerase (Ignicoccus hospitalis (strain KIN4/I / DSM 18386 / JCM 14125)).